The primary structure comprises 392 residues: Succinate--CoA ligase [ADP-forming] subunit beta (392 aa).

Positions 9-248 (KGLFRDYGVS…LHEEDPTEVK (240 aa)) constitute an ATP-grasp domain. Residues Lys50, 57-59 (GRG), Val106, and Glu111 each bind ATP. Residues Asn203 and Asp217 each contribute to the Mg(2+) site. Substrate-binding positions include Asn268 and 325–327 (GIV).

This sequence belongs to the succinate/malate CoA ligase beta subunit family. Heterotetramer of two alpha and two beta subunits. Requires Mg(2+) as cofactor.

The enzyme catalyses succinate + ATP + CoA = succinyl-CoA + ADP + phosphate. It carries out the reaction GTP + succinate + CoA = succinyl-CoA + GDP + phosphate. It functions in the pathway carbohydrate metabolism; tricarboxylic acid cycle; succinate from succinyl-CoA (ligase route): step 1/1. Succinyl-CoA synthetase functions in the citric acid cycle (TCA), coupling the hydrolysis of succinyl-CoA to the synthesis of either ATP or GTP and thus represents the only step of substrate-level phosphorylation in the TCA. The beta subunit provides nucleotide specificity of the enzyme and binds the substrate succinate, while the binding sites for coenzyme A and phosphate are found in the alpha subunit. The sequence is that of Succinate--CoA ligase [ADP-forming] subunit beta from Salinibacter ruber (strain DSM 13855 / M31).